The sequence spans 229 residues: 3-isopropylmalate dehydratase small subunit (229 aa).

Residues 208–229 form a disordered region; it reads KIESAREPDDDWTGPLADRGII.

It belongs to the LeuD family. LeuD type 1 subfamily. Heterodimer of LeuC and LeuD.

It carries out the reaction (2R,3S)-3-isopropylmalate = (2S)-2-isopropylmalate. The protein operates within amino-acid biosynthesis; L-leucine biosynthesis; L-leucine from 3-methyl-2-oxobutanoate: step 2/4. In terms of biological role, catalyzes the isomerization between 2-isopropylmalate and 3-isopropylmalate, via the formation of 2-isopropylmaleate. This is 3-isopropylmalate dehydratase small subunit from Bifidobacterium longum subsp. infantis (strain ATCC 15697 / DSM 20088 / JCM 1222 / NCTC 11817 / S12).